Reading from the N-terminus, the 838-residue chain is Leucine--tRNA ligase (838 aa).

Residues 36-46 carry the 'HIGH' region motif; the sequence is PYPSGKIHMGH. The short motif at 611–615 is the 'KMSKS' region element; the sequence is KMSKS. K614 contacts ATP.

Belongs to the class-I aminoacyl-tRNA synthetase family.

The protein resides in the cytoplasm. The catalysed reaction is tRNA(Leu) + L-leucine + ATP = L-leucyl-tRNA(Leu) + AMP + diphosphate. This Wolbachia pipientis wMel protein is Leucine--tRNA ligase.